A 351-amino-acid chain; its full sequence is Photosystem II D2 protein (351 aa).

Residues 39–59 (TSYLSIGGWFTGTTFVTSWYT) form a helical membrane-spanning segment. His-116 contributes to the chlorophyll a binding site. A helical transmembrane segment spans residues 123-139 (GFCLRQFEIARLVGIRP). 2 residues coordinate pheophytin a: Gln-128 and Asn-141. Residues 151 to 164 (IFVSVFLMYPLGQA) traverse the membrane as a helical segment. Residue His-196 coordinates chlorophyll a. Residues 206-226 (AALLCAIHGATVQNTIFEDGD) traverse the membrane as a helical segment. His-213 and Phe-260 together coordinate a plastoquinone. Position 213 (His-213) interacts with Fe cation. His-267 is a binding site for Fe cation. Residues 277-293 (GLWTSAIGIVGLALNLR) traverse the membrane as a helical segment.

Belongs to the reaction center PufL/M/PsbA/D family. In terms of assembly, PSII is composed of 1 copy each of membrane proteins PsbA, PsbB, PsbC, PsbD, PsbE, PsbF, PsbH, PsbI, PsbJ, PsbK, PsbL, PsbM, PsbT, PsbX, PsbY, PsbZ, Psb30/Ycf12, at least 3 peripheral proteins of the oxygen-evolving complex and a large number of cofactors. It forms dimeric complexes. The D1/D2 heterodimer binds P680, chlorophylls that are the primary electron donor of PSII, and subsequent electron acceptors. It shares a non-heme iron and each subunit binds pheophytin, quinone, additional chlorophylls, carotenoids and lipids. There is also a Cl(-1) ion associated with D1 and D2, which is required for oxygen evolution. The PSII complex binds additional chlorophylls, carotenoids and specific lipids. serves as cofactor.

It is found in the plastid. Its subcellular location is the chloroplast thylakoid membrane. The catalysed reaction is 2 a plastoquinone + 4 hnu + 2 H2O = 2 a plastoquinol + O2. In terms of biological role, photosystem II (PSII) is a light-driven water:plastoquinone oxidoreductase that uses light energy to abstract electrons from H(2)O, generating O(2) and a proton gradient subsequently used for ATP formation. It consists of a core antenna complex that captures photons, and an electron transfer chain that converts photonic excitation into a charge separation. The D1/D2 (PsbA/PsbD) reaction center heterodimer binds P680, the primary electron donor of PSII as well as several subsequent electron acceptors. D2 is needed for assembly of a stable PSII complex. The chain is Photosystem II D2 protein from Guillardia theta (Cryptophyte).